A 455-amino-acid polypeptide reads, in one-letter code: Aminopeptidase YwaD (455 aa).

The signal sequence occupies residues 1-31 (MKKLLTVMTMAVLTAGTLLLPAQSVTPAAHA). 5 residues coordinate Zn(2+): histidine 250, aspartate 262, glutamate 295, aspartate 323, and histidine 401.

It belongs to the peptidase M28 family. M28B subfamily. In terms of assembly, monomer. The cofactor is Zn(2+).

The protein localises to the secreted. The enzyme catalyses Release of N-terminal Arg and Lys from oligopeptides when P1' is not Pro. Also acts on arylamides of Arg and Lys.. It catalyses the reaction Release of an N-terminal amino acid, preferentially leucine, but not glutamic or aspartic acids.. Catalyzes the hydrolysis of a range of N-terminal amino acids. This chain is Aminopeptidase YwaD (ywaD), found in Bacillus subtilis (strain 168).